Here is a 361-residue protein sequence, read N- to C-terminus: Elongator complex protein 4 (361 aa).

Disordered regions lie at residues 93 to 124 and 338 to 361; these read QLPG…PQQE and DDEQ…SLDF. 2 stretches are compositionally biased toward polar residues: residues 104–121 and 346–355; these read NENS…SKNP and ISNTNPQKQP.

It belongs to the ELP4 family. In terms of assembly, component of the elongator complex.

It localises to the cytoplasm. Its subcellular location is the nucleus. The protein operates within tRNA modification; 5-methoxycarbonylmethyl-2-thiouridine-tRNA biosynthesis. Functionally, component of the elongator complex, a multiprotein complex which is required for multiple tRNA modifications, including mcm5U (5-methoxycarbonylmethyl uridine), mcm5s2U (5-methoxycarbonylmethyl-2-thiouridine), and ncm5U (5-carbamoylmethyl uridine). The elongator complex catalyzes formation of carboxymethyluridine in the wobble base at position 34 in tRNAs. The chain is Elongator complex protein 4 from Schizosaccharomyces pombe (strain 972 / ATCC 24843) (Fission yeast).